A 343-amino-acid chain; its full sequence is Heme A synthase (343 aa).

8 consecutive transmembrane segments (helical) span residues 13–33, 96–116, 130–150, 161–181, 197–217, 258–278, 294–314, and 318–338; these read VAIWLFIVAAMVFAMVVVGGA, HRLLGRTVGAVYAIPLIVFLI, AMLGLGGLQGLVGWWMVSSGL, LMTHLGLALALFVLLIWTALD, GWALAFLGAVFFQSLLGALVA, FNHRIFAYALLLAAVVLVVLA, AVAAVVFLQAALGVWTLMAAV, and LGVLHQAGAAVLLAVATAFAW. H260 provides a ligand contact to heme. H322 is a binding site for heme.

Belongs to the COX15/CtaA family. Type 2 subfamily. As to quaternary structure, interacts with CtaB. The cofactor is heme b.

The protein localises to the cell membrane. The enzyme catalyses Fe(II)-heme o + 2 A + H2O = Fe(II)-heme a + 2 AH2. It functions in the pathway porphyrin-containing compound metabolism; heme A biosynthesis; heme A from heme O: step 1/1. Its function is as follows. Catalyzes the conversion of heme O to heme A by two successive hydroxylations of the methyl group at C8. The first hydroxylation forms heme I, the second hydroxylation results in an unstable dihydroxymethyl group, which spontaneously dehydrates, resulting in the formyl group of heme A. The chain is Heme A synthase from Caulobacter vibrioides (strain ATCC 19089 / CIP 103742 / CB 15) (Caulobacter crescentus).